Consider the following 111-residue polypeptide: Holo-[acyl-carrier-protein] synthase (111 aa).

Positions 8 and 57 each coordinate Mg(2+).

It belongs to the P-Pant transferase superfamily. AcpS family. Mg(2+) is required as a cofactor.

Its subcellular location is the cytoplasm. The catalysed reaction is apo-[ACP] + CoA = holo-[ACP] + adenosine 3',5'-bisphosphate + H(+). Functionally, transfers the 4'-phosphopantetheine moiety from coenzyme A to a Ser of acyl-carrier-protein. This is Holo-[acyl-carrier-protein] synthase from Mycoplasmoides gallisepticum (strain R(low / passage 15 / clone 2)) (Mycoplasma gallisepticum).